Consider the following 154-residue polypeptide: SsrA-binding protein (154 aa).

This sequence belongs to the SmpB family.

The protein localises to the cytoplasm. Required for rescue of stalled ribosomes mediated by trans-translation. Binds to transfer-messenger RNA (tmRNA), required for stable association of tmRNA with ribosomes. tmRNA and SmpB together mimic tRNA shape, replacing the anticodon stem-loop with SmpB. tmRNA is encoded by the ssrA gene; the 2 termini fold to resemble tRNA(Ala) and it encodes a 'tag peptide', a short internal open reading frame. During trans-translation Ala-aminoacylated tmRNA acts like a tRNA, entering the A-site of stalled ribosomes, displacing the stalled mRNA. The ribosome then switches to translate the ORF on the tmRNA; the nascent peptide is terminated with the 'tag peptide' encoded by the tmRNA and targeted for degradation. The ribosome is freed to recommence translation, which seems to be the essential function of trans-translation. This is SsrA-binding protein from Streptococcus thermophilus (strain CNRZ 1066).